Here is a 161-residue protein sequence, read N- to C-terminus: MPSFDVVSKTDLAEVDNALAGITREVAQRFDFKGSKCSVERKDQMITVLADDDSKLKTMHELLSVHFTRRKVDPKALDYKTVEKASGNTVRQEVRIKDGVETVLAKRLVKEIKDAKLKVQVAIQGDELRVTGKKRDDLQEAIALLRKLDVDQPLQYINFRD.

Belongs to the YajQ family.

Nucleotide-binding protein. The sequence is that of Nucleotide-binding protein amb3630 from Paramagnetospirillum magneticum (strain ATCC 700264 / AMB-1) (Magnetospirillum magneticum).